We begin with the raw amino-acid sequence, 367 residues long: MISSLHRPTLAKVDLSAISENIEQVVSHIPKQVQTFAVVKANAYGHGAVEVAKHVSKQVDGFCVSNLDEALELRQAGIEQPILILGVVLPDGVPLAIQENISLTVASLEWLALAQKQGLDLTGLTCHIKVDSGMGRIGVRNLKDADNLIAGLKALGADVEGIFTHFATADEADDSKFKRQLSFFTDLVDNLTARPRLVHASNSATSIWHATTVFNTVRLGVVIYGLNPSGSVLELPYNIQPALSLETALIHVKTLPAGQEVGYGATYTTTAEEVIGTLPIGYADGWTRDLQGFHVIVDGQLCPIVGRVSMDQITVRLPKVYPLGTPVTLMGENGGASITATEVAEKRGTINYEVLCLLSDRVPRSYD.

The active-site Proton acceptor; specific for D-alanine is the K40. K40 carries the N6-(pyridoxal phosphate)lysine modification. R136 contacts substrate. Y263 serves as the catalytic Proton acceptor; specific for L-alanine. M310 provides a ligand contact to substrate.

This sequence belongs to the alanine racemase family. Pyridoxal 5'-phosphate is required as a cofactor.

It catalyses the reaction L-alanine = D-alanine. The protein operates within amino-acid biosynthesis; D-alanine biosynthesis; D-alanine from L-alanine: step 1/1. In terms of biological role, catalyzes the interconversion of L-alanine and D-alanine. May also act on other amino acids. This is Alanine racemase (alr) from Streptococcus thermophilus (strain CNRZ 1066).